A 102-amino-acid polypeptide reads, in one-letter code: Urease subunit beta (102 aa).

The protein belongs to the urease beta subunit family. As to quaternary structure, heterotrimer of UreA (gamma), UreB (beta) and UreC (alpha) subunits. Three heterotrimers associate to form the active enzyme.

Its subcellular location is the cytoplasm. It carries out the reaction urea + 2 H2O + H(+) = hydrogencarbonate + 2 NH4(+). The protein operates within nitrogen metabolism; urea degradation; CO(2) and NH(3) from urea (urease route): step 1/1. The protein is Urease subunit beta of Pseudomonas savastanoi pv. phaseolicola (strain 1448A / Race 6) (Pseudomonas syringae pv. phaseolicola (strain 1448A / Race 6)).